The chain runs to 67 residues: Alpha-like toxin Lqh3 (67 aa).

Residues Arg2–His66 enclose the LCN-type CS-alpha/beta domain. 4 cysteine pairs are disulfide-bonded: Cys12–Cys65, Cys16–Cys37, Cys23–Cys47, and Cys27–Cys49. Serine amide is present on Ser67.

It belongs to the long (4 C-C) scorpion toxin superfamily. Sodium channel inhibitor family. Alpha subfamily. As to quaternary structure, monomer. As to expression, expressed by the venom gland.

It localises to the secreted. Its function is as follows. Alpha toxins bind voltage-independently at site-3 of sodium channels (Nav) and inhibit the inactivation of the activated channels, thereby blocking neuronal transmission. The dissociation is voltage-dependent. This alpha-like toxin is highly toxic to insects and competes with LqhaIT on binding to insect sodium channels. Differs from classical anti-mammalian alpha-toxins as it inhibits sodium channel inactivation in cell bodies of hippocampus brain neurons, on which the anti-mammalian Lqh2 is inactive, and is unable to affect Nav1.2 in the rat brain, on which Lqh2 is highly active. Moreover, its pharmacological properties are unique in that its binding affinity for insect channels drops &gt;30-fold at pH 8.5 versus pH 6.5, and its rate of association with receptor site-3 on both insect and mammalian sodium channels is 4-15-fold slower compared with LqhaIT and Lqh2. The protein is Alpha-like toxin Lqh3 of Leiurus hebraeus (Hebrew deathstalker scorpion).